Here is a 476-residue protein sequence, read N- to C-terminus: Vitamin D-binding protein (476 aa).

An N-terminal signal peptide occupies residues methionine 1 to alanine 16. Albumin domains follow at residues leucine 17–histidine 208, leucine 209–arginine 394, and glutamine 395–serine 476. 14 disulfide bridges follow: cysteine 29-cysteine 75, cysteine 74-cysteine 83, cysteine 96-cysteine 112, cysteine 111-cysteine 122, cysteine 145-cysteine 190, cysteine 189-cysteine 198, cysteine 220-cysteine 266, cysteine 265-cysteine 273, cysteine 286-cysteine 300, cysteine 299-cysteine 311, cysteine 335-cysteine 376, cysteine 375-cysteine 384, cysteine 407-cysteine 453, and cysteine 452-cysteine 462. N-linked (GlcNAc...) asparagine glycosylation occurs at asparagine 288. Serine 434 carries the post-translational modification Phosphoserine.

The protein belongs to the ALB/AFP/VDB family. In terms of assembly, associates with membrane-bound immunoglobulin on the surface of B-lymphocytes and with IgG Fc receptor on the membranes of T-lymphocytes. Interacts with LRP2; the interaction is required for renal uptake of GC in complex with 25-hydroxyvitamin D3.

It localises to the secreted. Involved in vitamin D transport and storage, scavenging of extracellular G-actin, enhancement of the chemotactic activity of C5 alpha for neutrophils in inflammation and macrophage activation. The chain is Vitamin D-binding protein (Gc) from Mus musculus (Mouse).